Here is a 179-residue protein sequence, read N- to C-terminus: Photosystem I assembly protein Ycf3 (179 aa).

3 TPR repeats span residues 29-62 (AFSYYRAGMSAQSEGKYAEALENYYEALQLEEDP), 66-99 (SYTLYNIGLIYGNNGNYSQALEYYHQALELNSNL), and 126-159 (NLEIRNDEYLELAKEFFDKAAEYWRQALKLAPDN).

Belongs to the Ycf3 family.

The protein resides in the plastid. Its subcellular location is the chloroplast thylakoid membrane. In terms of biological role, essential for the assembly of the photosystem I (PSI) complex. May act as a chaperone-like factor to guide the assembly of the PSI subunits. This chain is Photosystem I assembly protein Ycf3, found in Trieres chinensis (Marine centric diatom).